The primary structure comprises 369 residues: O-methyltransferase 12 (369 aa).

S-adenosyl-L-methionine-binding positions include G181, D204, 229–231 (GDF), D230, F231, and K244. The active-site Proton acceptor is H248.

It belongs to the class I-like SAM-binding methyltransferase superfamily. Cation-independent O-methyltransferase family. COMT subfamily.

The enzyme catalyses resorcinol + S-adenosyl-L-methionine = 3-methoxyphenol + S-adenosyl-L-homocysteine + H(+). Functionally, S-adenosyl-L-methionine dependent O-methyltransferase that may be involved in modifying resorcinol ring to synthesize a variant of 4-methyl-5-pentylbenzene-1,3-diol. The protein is O-methyltransferase 12 (omt12) of Dictyostelium discoideum (Social amoeba).